The following is a 923-amino-acid chain: Dynein axonemal intermediate chain 3 (923 aa).

The disordered stretch occupies residues Met-1–Glu-35. Positions Lys-10 to Met-19 are enriched in basic residues. WD repeat units lie at residues Glu-398–Glu-438, Gly-480–Thr-536, Val-702–Leu-741, and Cys-745–Ala-785. Positions Leu-869 to Glu-889 form a coiled coil.

As to quaternary structure, interacts with ACTR2; this interaction reduces binding of the Arp2/3 complex to the VCA domain of nucleation promoting factors. Part of the multisubunit axonemal dynein complex formed at least of two heavy chains and a number of intermediate and light chains. Found in a associated with the catalytic heavy chain DNAH2, the intermediate chain DNAI4, and the light chain DYNLT1. As to expression, strongly expressed in the testes. Detected also in brain and lung tissues.

It localises to the cytoplasm. Functionally, acts as a negative regulator of cell migration, invasion, and metastasis downstream of p53/TP53, through inhibition of Arp2/3 complex-mediated actin polymerization. Via its association with the multisubunit axonemal dynein complex, is potentially involved in the regulation of cilia function. May play a role in osteogenesis of dental tissue-derived mesenchymal stem cells. The sequence is that of Dynein axonemal intermediate chain 3 (Dnai3) from Mus musculus (Mouse).